Consider the following 37-residue polypeptide: Calcitonin gene-related peptide (37 aa).

Cysteines 2 and 7 form a disulfide. Position 37 is a phenylalanine amide (Phe-37).

It belongs to the calcitonin family.

Its function is as follows. CGRP induces vasodilation. It dilates a variety of vessels including the coronary, cerebral and systemic vasculature. Its abundance in the CNS also points toward a neurotransmitter or neuromodulator role. In Pelophylax ridibundus (Marsh frog), this protein is Calcitonin gene-related peptide.